Here is a 259-residue protein sequence, read N- to C-terminus: MDLVTYQTIKVRFQASVCYITFHRPEANNTINDTLIEECLQVLNQCETSTVTVVVLEGLPEVFCFGADFQEIYQEMKRGRKQASSQEPLYDLWMKLQTGPYVTISHVRGKVNAGGLGFVSATDIAIADQTASFSLSELLFGLYPACVLPFLIRRIGRQKAHYMTLMTKPISVQEASEWGLIDAFDAESDVLLRKHLLRLRRLNKKGIAHYKQFMSSLDHQVSRAKATALTANQDMFSDPQNQMGIIRYVETGQFPWEDQ.

Catalysis depends on residues aspartate 68 and glutamate 137.

This sequence belongs to the enoyl-CoA hydratase/isomerase family.

It is found in the cytoplasm. It functions in the pathway antibiotic biosynthesis; bacillaene biosynthesis. Functionally, involved in some intermediate steps for the synthesis of the antibiotic polyketide bacillaene which is involved in secondary metabolism. Catalyzes the dehydration of the (S)-3-hydroxy-3-methylglutaryl group tethered to PksL to a 3-methylglutaconyl moiety. In Bacillus subtilis (strain 168), this protein is Bacillaene synthase dehydratase PksH (pksH).